The following is a 134-amino-acid chain: MSRVKRGVAAHAKHKKVLKAAKGFYGRRKNTIRAAKAAVDRSKQFAYRDRKVNKRNFRALWIQRINAAVRESGLTYGRFIDGLNKAGIEVDRKVLSDMAIHEPAAFGALVEASKKALSYLKDTGTKNEFETAVK.

This sequence belongs to the bacterial ribosomal protein bL20 family.

Binds directly to 23S ribosomal RNA and is necessary for the in vitro assembly process of the 50S ribosomal subunit. It is not involved in the protein synthesizing functions of that subunit. The chain is Large ribosomal subunit protein bL20 from Allorhizobium ampelinum (strain ATCC BAA-846 / DSM 112012 / S4) (Agrobacterium vitis (strain S4)).